A 126-amino-acid polypeptide reads, in one-letter code: Small ribosomal subunit protein uS8 (126 aa).

The protein belongs to the universal ribosomal protein uS8 family. As to quaternary structure, part of the 30S ribosomal subunit. Contacts proteins S5 and S12.

One of the primary rRNA binding proteins, it binds directly to 16S rRNA central domain where it helps coordinate assembly of the platform of the 30S subunit. This is Small ribosomal subunit protein uS8 from Desulfovibrio desulfuricans (strain ATCC 27774 / DSM 6949 / MB).